The chain runs to 351 residues: Photosystem II D2 protein (351 aa).

The helical transmembrane segment at 39 to 59 (TAYLAVGGWMTGTTFVTSWYT) threads the bilayer. His-116 provides a ligand contact to chlorophyll a. Residues 123-139 (GFCLRQFEIARLVGIRP) form a helical membrane-spanning segment. Residues Gln-128 and Asn-141 each contribute to the pheophytin a site. A helical transmembrane segment spans residues 151–164 (VFVSVFLLYPLGQA). Residue His-196 coordinates chlorophyll a. A helical membrane pass occupies residues 206–226 (GALLCAIHGATVENTLFEDGD). Residues His-213 and Phe-260 each contribute to the a plastoquinone site. His-213 contributes to the Fe cation binding site. His-267 contributes to the Fe cation binding site. The chain crosses the membrane as a helical span at residues 277–293 (GLWTSAIGIVGLALNLR).

The protein belongs to the reaction center PufL/M/PsbA/D family. In terms of assembly, PSII is composed of 1 copy each of membrane proteins PsbA, PsbB, PsbC, PsbD, PsbE, PsbF, PsbH, PsbI, PsbJ, PsbK, PsbL, PsbM, PsbT, PsbX, PsbY, PsbZ, Psb30/Ycf12, at least 3 peripheral proteins of the oxygen-evolving complex and a large number of cofactors. It forms dimeric complexes. The D1/D2 heterodimer binds P680, chlorophylls that are the primary electron donor of PSII, and subsequent electron acceptors. It shares a non-heme iron and each subunit binds pheophytin, quinone, additional chlorophylls, carotenoids and lipids. There is also a Cl(-1) ion associated with D1 and D2, which is required for oxygen evolution. The PSII complex binds additional chlorophylls, carotenoids and specific lipids. serves as cofactor.

The protein localises to the plastid. It localises to the chloroplast thylakoid membrane. The enzyme catalyses 2 a plastoquinone + 4 hnu + 2 H2O = 2 a plastoquinol + O2. Its function is as follows. Photosystem II (PSII) is a light-driven water:plastoquinone oxidoreductase that uses light energy to abstract electrons from H(2)O, generating O(2) and a proton gradient subsequently used for ATP formation. It consists of a core antenna complex that captures photons, and an electron transfer chain that converts photonic excitation into a charge separation. The D1/D2 (PsbA/PsbD) reaction center heterodimer binds P680, the primary electron donor of PSII as well as several subsequent electron acceptors. D2 is needed for assembly of a stable PSII complex. This Phaeodactylum tricornutum (strain CCAP 1055/1) protein is Photosystem II D2 protein.